The sequence spans 117 residues: Phosphoribosyl-ATP pyrophosphatase (117 aa).

This sequence belongs to the PRA-PH family.

The protein resides in the cytoplasm. It carries out the reaction 1-(5-phospho-beta-D-ribosyl)-ATP + H2O = 1-(5-phospho-beta-D-ribosyl)-5'-AMP + diphosphate + H(+). It functions in the pathway amino-acid biosynthesis; L-histidine biosynthesis; L-histidine from 5-phospho-alpha-D-ribose 1-diphosphate: step 2/9. In Rhodospirillum rubrum (strain ATCC 11170 / ATH 1.1.1 / DSM 467 / LMG 4362 / NCIMB 8255 / S1), this protein is Phosphoribosyl-ATP pyrophosphatase.